The primary structure comprises 113 residues: Mitochondrial import inner membrane translocase subunit tim16 (113 aa).

The J-like stretch occupies residues K56–K108.

This sequence belongs to the TIM16/PAM16 family. In terms of assembly, probable component of the PAM complex at least composed of a mitochondrial HSP70 protein, grepE, tim16 and tim14. Associates with the TIM23 complex.

The protein resides in the mitochondrion inner membrane. Regulates ATP-dependent protein translocation into the mitochondrial matrix. The sequence is that of Mitochondrial import inner membrane translocase subunit tim16 (timm16) from Dictyostelium discoideum (Social amoeba).